The following is a 665-amino-acid chain: Methionine--tRNA ligase (665 aa).

The 'HIGH' region signature appears at 13-23 (YYPSGKLHIGS). The 'KMSKS' region motif lies at 309-313 (KMSKS). An ATP-binding site is contributed by Lys312. The 104-residue stretch at 562–665 (DFDKVEIRVA…PAVPNGSVIG (104 aa)) folds into the tRNA-binding domain.

It belongs to the class-I aminoacyl-tRNA synthetase family. MetG type 2B subfamily. Homodimer.

It is found in the cytoplasm. It carries out the reaction tRNA(Met) + L-methionine + ATP = L-methionyl-tRNA(Met) + AMP + diphosphate. Is required not only for elongation of protein synthesis but also for the initiation of all mRNA translation through initiator tRNA(fMet) aminoacylation. In Streptococcus pneumoniae serotype 4 (strain ATCC BAA-334 / TIGR4), this protein is Methionine--tRNA ligase (metG).